Consider the following 469-residue polypeptide: Programmed cell death protein 4 (469 aa).

At methionine 1 the chain carries N-acetylmethionine. A compositionally biased stretch (polar residues) spans 1-23; it reads MDIENEQTLNVNPTDPDNLSDSL. Disordered stretches follow at residues 1-37 and 58-128; these read MDIE…EEIK and KAKR…GTPG. At serine 25 the chain carries Phosphoserine. Positions 58 to 64 match the Nuclear localization signal motif; that stretch reads KAKRRLR. At serine 67 the chain carries Phosphoserine; by PKB and RPS6KB1. Phosphoserine occurs at positions 68, 71, 76, 78, and 94. The short motif at 70–76 is the Phosphodegron element; that stretch reads DSGRGDS. Residues 114 to 125 show a composition bias toward gly residues; that stretch reads KKGGAGGKGVWG. At tyrosine 152 the chain carries Phosphotyrosine. Positions 163-284 constitute an MI 1 domain; sequence AFEKTLTPII…CNTYIDSYKG (122 aa). Serine 313 and serine 317 each carry phosphoserine. The MI 2 domain occupies 326 to 449; sequence HLVKEIDMLL…SKQLRDLCPS (124 aa). Residues 448 to 454 carry the Nuclear localization signal motif; it reads PSRGRKR. Position 457 is a phosphoserine; by PKB (serine 457).

Belongs to the PDCD4 family. As to quaternary structure, interacts (via MI domains) with EIF4A1 and EIF4A2 (via N-terminal domain). Heterotrimer with EIF4A1; one molecule of PDCD4 binds two molecules of EIF4A1. Interacts with EIF4G1. May form a complex with EIF4A1 and EIF4G1. The interaction between PDCD4 and EIF4A1 interferes with the interaction between EIF4A1 and EIF4G. When phosphorylated, interacts with BTRC and FBXW11. Post-translationally, polyubiquitinated, leading to its proteasomal degradation. Rapidly degraded in response to mitogens. Phosphorylation of the phosphodegron promotes interaction with BTRC and proteasomal degradation. Phosphorylated at Ser-67 by RPS6KB1 in response to mitogens; phosphorylation promotes proteasomal degradation of PDCD4. As to expression, expressed ubiquitously. Highyly expressed in thymus and liver. Moderately expressed in brain, kidney and spleen; weakly in lung and heart. Expression is up- or down-regulated in response to apoptosis inducers. Regulated by many programmed cell death-inducing stimuli.

It localises to the nucleus. The protein localises to the cytoplasm. In terms of biological role, inhibits translation initiation and cap-dependent translation. May excert its function by hindering the interaction between EIF4A1 and EIF4G. Inhibits the helicase activity of EIF4A. Modulates the activation of JUN kinase. Down-regulates the expression of MAP4K1, thus inhibiting events important in driving invasion, namely, MAPK85 activation and consequent JUN-dependent transcription. May play a role in apoptosis. Tumor suppressor. Inhibits tumor promoter-induced neoplastic transformation. Binds RNA. The sequence is that of Programmed cell death protein 4 (Pdcd4) from Mus musculus (Mouse).